The sequence spans 352 residues: 4-hydroxy-3-methylbut-2-en-1-yl diphosphate synthase (flavodoxin) (352 aa).

The [4Fe-4S] cluster site is built by C262, C265, C297, and E304.

It belongs to the IspG family. [4Fe-4S] cluster serves as cofactor.

It catalyses the reaction (2E)-4-hydroxy-3-methylbut-2-enyl diphosphate + oxidized [flavodoxin] + H2O + 2 H(+) = 2-C-methyl-D-erythritol 2,4-cyclic diphosphate + reduced [flavodoxin]. It participates in isoprenoid biosynthesis; isopentenyl diphosphate biosynthesis via DXP pathway; isopentenyl diphosphate from 1-deoxy-D-xylulose 5-phosphate: step 5/6. Functionally, converts 2C-methyl-D-erythritol 2,4-cyclodiphosphate (ME-2,4cPP) into 1-hydroxy-2-methyl-2-(E)-butenyl 4-diphosphate. The polypeptide is 4-hydroxy-3-methylbut-2-en-1-yl diphosphate synthase (flavodoxin) (Campylobacter concisus (strain 13826)).